The chain runs to 241 residues: Adenylate kinase 3 (241 aa).

Position 38–43 (38–43) interacts with ATP; the sequence is GCGKGT. An NMP region spans residues 58–87; sequence ATGDMLRAAVAAKTPLGIKAKEAMDKGELV. Residues threonine 59, arginine 64, 85-87, 113-116, and glutamine 120 contribute to the AMP site; these read ELV and GFPR. The segment at 154 to 191 is LID; it reads GRWIHPSSGRSYHTKFAPPKTPGLDDVTGEPLIQRKDD. An ATP-binding site is contributed by arginine 155. AMP contacts are provided by arginine 188 and arginine 199.

The protein belongs to the adenylate kinase family.

Its subcellular location is the cytoplasm. The enzyme catalyses AMP + ATP = 2 ADP. Catalyzes the reversible transfer of the terminal phosphate group between ATP and AMP. Plays an important role in cellular energy homeostasis and in adenine nucleotide metabolism. The sequence is that of Adenylate kinase 3 (ADK-A) from Oryza sativa subsp. japonica (Rice).